The sequence spans 138 residues: Putative nickel-responsive regulator (138 aa).

4 residues coordinate Ni(2+): His-76, His-87, His-89, and Cys-95.

Belongs to the transcriptional regulatory CopG/NikR family. The cofactor is Ni(2+).

Functionally, transcriptional regulator. The polypeptide is Putative nickel-responsive regulator (Pseudomonas putida (strain W619)).